The sequence spans 207 residues: High frequency lysogenization protein HflD homolog (207 aa).

This sequence belongs to the HflD family.

Its subcellular location is the cytoplasm. The protein resides in the cell inner membrane. The sequence is that of High frequency lysogenization protein HflD homolog from Pseudomonas fluorescens (strain SBW25).